Consider the following 345-residue polypeptide: Mitochondrial substrate carrier family protein J (345 aa).

Topologically, residues 1 to 31 (MSSSHTIQETKEVHTKTNKRIQWDDLDPKRY) are mitochondrial intermembrane. Solcar repeat units lie at residues 30 to 118 (RYYF…VKQG), 129 to 217 (DLLF…SKSK), and 255 to 342 (EDPI…VKKL). The chain crosses the membrane as a helical span at residues 32-52 (YFYNFLLGGSIDLLMFPLDVI). At 53 to 88 (RTRLQVQGSQNVIQSFPQYNGTFDGFKKLIRLEGKR) the chain is on the mitochondrial matrix side. Residues 89 to 110 (ALYKGFLTSECGYLCSRAIYFG) form a helical membrane-spanning segment. The Mitochondrial intermembrane segment spans residues 111 to 129 (SYEFVKQGFLKGRSDSDSD). The chain crosses the membrane as a helical span at residues 130–150 (LLFVTTISGAISEALASVIWV). Residues 151 to 191 (PFDVATQSVQIQGSLSKPKYKGGSDVFKKIYGERGIKGLYK) are Mitochondrial matrix-facing. Residues 192-208 (GFGATIIRNVPYSGIWW) form a helical membrane-spanning segment. At 209–257 (GTYEISKSKLTQFNIRQKLGLKERSSHSLAVSAEIDKNNPSHEVENEDP) the chain is on the mitochondrial intermembrane side. A helical membrane pass occupies residues 258–278 (IIHFISGFFAAVFATSITNPL). Residues 279–316 (DVAKTRLQTGVFPENEKPNFYTIIKSTIRKEGIRALWK) lie on the Mitochondrial matrix side of the membrane. Residues 317–337 (GLVPSLLTSTPYSMISIFLYE) form a helical membrane-spanning segment. Over 338-345 (EVKKLSLK) the chain is Mitochondrial intermembrane.

The protein belongs to the mitochondrial carrier (TC 2.A.29) family.

It is found in the mitochondrion inner membrane. Mitochondrial solute carriers shuttle metabolites, nucleotides, and cofactors through the mitochondrial inner membrane. The chain is Mitochondrial substrate carrier family protein J (mcfJ) from Dictyostelium discoideum (Social amoeba).